We begin with the raw amino-acid sequence, 160 residues long: Large ribosomal subunit protein uL15 (160 aa).

A compositionally biased stretch (basic and acidic residues) spans 1-13 (MKLNEIRDNEGAR). The disordered stretch occupies residues 1-41 (MKLNEIRDNEGARKSRIRVGRGIGSGKGKTGGRGVKGQKSR). A compositionally biased stretch (gly residues) spans 21–35 (RGIGSGKGKTGGRGV).

The protein belongs to the universal ribosomal protein uL15 family. Part of the 50S ribosomal subunit.

Its function is as follows. Binds to the 23S rRNA. The sequence is that of Large ribosomal subunit protein uL15 from Parvibaculum lavamentivorans (strain DS-1 / DSM 13023 / NCIMB 13966).